The following is a 172-amino-acid chain: R-phycocyanin-2 beta chain (172 aa).

At asparagine 72 the chain carries N4-methylasparagine. Position 82 (cysteine 82) interacts with (2R,3E)-phycocyanobilin. Cysteine 153 is a binding site for (2R,3E)-phycoerythrobilin.

The protein belongs to the phycobiliprotein family. As to quaternary structure, heterodimer of an alpha and a beta chain. In terms of processing, contains two covalently linked bilin chromophores.

The protein localises to the cellular thylakoid membrane. Light-harvesting photosynthetic bile pigment-protein from the phycobiliprotein complex. This is R-phycocyanin-2 beta chain (rpcB) from Synechococcus sp. (strain WH8020).